Reading from the N-terminus, the 463-residue chain is Cysteine--tRNA ligase (463 aa).

Cys27 provides a ligand contact to Zn(2+). Residues Ala29 to His39 carry the 'HIGH' region motif. Zn(2+) is bound by residues Cys205, His230, and Glu234. The short motif at Lys261–Ser265 is the 'KMSKS' region element. Lys264 serves as a coordination point for ATP.

The protein belongs to the class-I aminoacyl-tRNA synthetase family. In terms of assembly, monomer. Requires Zn(2+) as cofactor.

The protein resides in the cytoplasm. The enzyme catalyses tRNA(Cys) + L-cysteine + ATP = L-cysteinyl-tRNA(Cys) + AMP + diphosphate. The protein is Cysteine--tRNA ligase of Mycolicibacterium vanbaalenii (strain DSM 7251 / JCM 13017 / BCRC 16820 / KCTC 9966 / NRRL B-24157 / PYR-1) (Mycobacterium vanbaalenii).